The sequence spans 715 residues: Interferon-induced GTP-binding protein Mx2 (715 aa).

Positions 1 to 14 are enriched in basic residues; that stretch reads MSKAHKSWPHRRRN. Disordered regions lie at residues 1-24 and 69-88; these read MSKA…SLKK and NNQP…PENN. Residues 69 to 80 show a composition bias toward polar residues; that stretch reads NNQPLPGNTSQP. The Dynamin-type G domain occupies 115–387; it reads DLALPAIAVI…LITHIQKSLP (273 aa). The tract at residues 125 to 132 is G1 motif; sequence GDQSSGKS. Residue 125–132 participates in GTP binding; that stretch reads GDQSSGKS. Positions 150 to 152 are G2 motif; the sequence is VTR. The G3 motif stretch occupies residues 225-228; that stretch reads DLPG. GTP is bound by residues 225–229 and 294–297; these read DLPGI and TKPD. A G4 motif region spans residues 294 to 297; the sequence is TKPD. A G5 motif region spans residues 326 to 329; it reads KCRG. The 92-residue stretch at 623-714 folds into the GED domain; that stretch reads FNEIGVHLNA…ALCQFSSKEI (92 aa).

Belongs to the TRAFAC class dynamin-like GTPase superfamily. Dynamin/Fzo/YdjA family.

It is found in the cytoplasm. Its subcellular location is the nucleus. Functionally, interferon-induced dynamin-like GTPase with antiviral activity. In Macaca mulatta (Rhesus macaque), this protein is Interferon-induced GTP-binding protein Mx2 (MX2).